Consider the following 73-residue polypeptide: Plasticin-A1 (73 aa).

An N-terminal signal peptide occupies residues 1 to 22 (MAFLKKSLFLVLFLAIVPLSIC). Positions 23–42 (EEEKREEENEEKQEDDDQSE) are excised as a propeptide. Residues 25–45 (EKREEENEEKQEDDDQSEKRG) are disordered. A compositionally biased stretch (acidic residues) spans 30–40 (ENEEKQEDDDQ). At G70 the chain carries Glycine amide. Positions 72 to 73 (ES) are excised as a propeptide.

This sequence belongs to the frog skin active peptide (FSAP) family. Plasticin subfamily. As to expression, expressed by the skin glands.

It is found in the secreted. The protein localises to the target cell membrane. Its function is as follows. Peptide with no antimicrobial activity. May act in synergy with cationic peptides by enhancing their activity. Has a moderate hemolytic activity. The chain is Plasticin-A1 from Agalychnis annae (Blue-sided leaf frog).